We begin with the raw amino-acid sequence, 290 residues long: uncharacterized protein (290 aa).

This is an uncharacterized protein from Lepidoptera (butterflies and moths).